Reading from the N-terminus, the 474-residue chain is MNWVEKYRPKTMSEIVGNNKIKEELKNWIEEILHNEIPKPVLLVGPPGCGKTTLTNALANDYGFELIELNASDKRNKDIIRQIVGGASSSKSITGKRVLIVLDEVDGLSGNSDRGGVSEIIKIIKNAKNPIILTANDIYKPSLMSLRTVCNIVKIGSVHTNSIVPVLRRISLKEGFEVDDKILKIIAKHAGGDVRSAINDLESLAMGNTFDEDNVRELPDRDTDKSIFDAIRIIFKTTHYDISLEATRDLKEDIGTVQEWIAENVPREYKKGKEICLAYDNLSKADIFLGRVYKRQYYGLWRYASALMSAGVSLAKDEKYRGFFSYMRPTIFTKMSRSKGKRGAVNKVLEKISLKSHVSKRRAREDILYLEYILKNDAEMGAKLCEFYEFTKEDIEYLTNKTIAKKIIKLMKGDDKKTNNKKGKENKTKNTTKKIKEIKETPKKEEVKEPKKQIEKQKSEKKEPKKQMTLESFF.

Residue 45 to 52 (GPPGCGKT) coordinates ATP. Over residues 415 to 468 (DKKTNNKKGKENKTKNTTKKIKEIKETPKKEEVKEPKKQIEKQKSEKKEPKKQM) the composition is skewed to basic and acidic residues. Residues 415-474 (DKKTNNKKGKENKTKNTTKKIKEIKETPKKEEVKEPKKQIEKQKSEKKEPKKQMTLESFF) are disordered.

Belongs to the activator 1 small subunits family. RfcL subfamily. In terms of assembly, heteromultimer composed of small subunits (RfcS) and large subunits (RfcL).

Functionally, part of the RFC clamp loader complex which loads the PCNA sliding clamp onto DNA. The chain is Replication factor C large subunit from Methanococcus aeolicus (strain ATCC BAA-1280 / DSM 17508 / OCM 812 / Nankai-3).